We begin with the raw amino-acid sequence, 313 residues long: Elongation factor Ts (313 aa).

Residues 82 to 85 are involved in Mg(2+) ion dislocation from EF-Tu; the sequence is TDFV.

It belongs to the EF-Ts family.

The protein localises to the cytoplasm. Its function is as follows. Associates with the EF-Tu.GDP complex and induces the exchange of GDP to GTP. It remains bound to the aminoacyl-tRNA.EF-Tu.GTP complex up to the GTP hydrolysis stage on the ribosome. This Nostoc sp. (strain PCC 7120 / SAG 25.82 / UTEX 2576) protein is Elongation factor Ts.